Reading from the N-terminus, the 127-residue chain is Spore germination protein 1 (127 aa).

The first 25 residues, 1–25, serve as a signal peptide directing secretion; the sequence is MNIKNSLILIISTIFVLSMINGGLT. N-linked (GlcNAc...) asparagine glycans are attached at residues N54 and N118.

The protein belongs to the Dictyostelium gerABC family.

The protein localises to the secreted. In Dictyostelium discoideum (Social amoeba), this protein is Spore germination protein 1 (gerA).